The primary structure comprises 352 residues: 4-hydroxy-3-methylbut-2-en-1-yl diphosphate synthase (flavodoxin) (352 aa).

Residues Cys-265, Cys-268, Cys-300, and Glu-307 each contribute to the [4Fe-4S] cluster site.

The protein belongs to the IspG family. [4Fe-4S] cluster is required as a cofactor.

The catalysed reaction is (2E)-4-hydroxy-3-methylbut-2-enyl diphosphate + oxidized [flavodoxin] + H2O + 2 H(+) = 2-C-methyl-D-erythritol 2,4-cyclic diphosphate + reduced [flavodoxin]. The protein operates within isoprenoid biosynthesis; isopentenyl diphosphate biosynthesis via DXP pathway; isopentenyl diphosphate from 1-deoxy-D-xylulose 5-phosphate: step 5/6. Converts 2C-methyl-D-erythritol 2,4-cyclodiphosphate (ME-2,4cPP) into 1-hydroxy-2-methyl-2-(E)-butenyl 4-diphosphate. This is 4-hydroxy-3-methylbut-2-en-1-yl diphosphate synthase (flavodoxin) from Persephonella marina (strain DSM 14350 / EX-H1).